Consider the following 194-residue polypeptide: MQDLTSAAAYYHQSMMMTTAKQNQPELPEQEQLKCPRCDSPNTKFCYYNNYNLSQPRHFCKNCRRYWTKGGALRNIPVGGGTRKSNKRSGSSPSSNLKNQTVAEKPDHHGSGSEEKEERVSGQEMNPTRMLYGLPVGDPNGASFSSLLASNMQMGGLVYESGSRWLPGMDLGLGSVRRSDDTWTDLAMNRMEKN.

A Dof-type zinc finger spans residues 33–87 (LKCPRCDSPNTKFCYYNNYNLSQPRHFCKNCRRYWTKGGALRNIPVGGGTRKSNK). Positions 35, 38, 60, and 63 each coordinate Zn(2+). The disordered stretch occupies residues 74–125 (RNIPVGGGTRKSNKRSGSSPSSNLKNQTVAEKPDHHGSGSEEKEERVSGQEM). Over residues 88–99 (RSGSSPSSNLKN) the composition is skewed to low complexity. The span at 104–121 (EKPDHHGSGSEEKEERVS) shows a compositional bias: basic and acidic residues.

It is found in the nucleus. Functionally, transcription factor that binds specifically to a 5'-AA[AG]G-3' consensus core sequence. In Arabidopsis thaliana (Mouse-ear cress), this protein is Dof zinc finger protein DOF1.7 (DOF1.7).